A 396-amino-acid polypeptide reads, in one-letter code: Elongation factor Tu 1 (396 aa).

The 197-residue stretch at K10–Q206 folds into the tr-type G domain. The G1 stretch occupies residues G19–T26. Residue G19–T26 coordinates GTP. T26 provides a ligand contact to Mg(2+). The segment at G60–N64 is G2. The tract at residues D81–G84 is G3. GTP contacts are provided by residues D81–H85 and N136–D139. The G4 stretch occupies residues N136–D139. Residues S174–L176 form a G5 region.

Belongs to the TRAFAC class translation factor GTPase superfamily. Classic translation factor GTPase family. EF-Tu/EF-1A subfamily. Monomer.

The protein localises to the cytoplasm. It carries out the reaction GTP + H2O = GDP + phosphate + H(+). Its function is as follows. GTP hydrolase that promotes the GTP-dependent binding of aminoacyl-tRNA to the A-site of ribosomes during protein biosynthesis. The chain is Elongation factor Tu 1 from Nitrosomonas eutropha (strain DSM 101675 / C91 / Nm57).